Reading from the N-terminus, the 556-residue chain is DNA ligase (556 aa).

E245 serves as a coordination point for ATP. K247 serves as the catalytic N6-AMP-lysine intermediate. Residues R252, R267, E296, F336, R408, and K414 each contribute to the ATP site.

It belongs to the ATP-dependent DNA ligase family. Requires Mg(2+) as cofactor.

The enzyme catalyses ATP + (deoxyribonucleotide)n-3'-hydroxyl + 5'-phospho-(deoxyribonucleotide)m = (deoxyribonucleotide)n+m + AMP + diphosphate.. Functionally, DNA ligase that seals nicks in double-stranded DNA during DNA replication, DNA recombination and DNA repair. The chain is DNA ligase from Methanosphaerula palustris (strain ATCC BAA-1556 / DSM 19958 / E1-9c).